Here is a 195-residue protein sequence, read N- to C-terminus: Small ribosomal subunit protein uS4 (195 aa).

The S4 RNA-binding domain maps to 109-183 (RRLQTQVFKL…VKRKNLKKNQ (75 aa)). The disordered stretch occupies residues 165 to 195 (PFGGGRPGRVKRKNLKKNQGGGGGAAEEEED).

This sequence belongs to the universal ribosomal protein uS4 family. As to quaternary structure, component of the small ribosomal subunit. Identified in a IGF2BP1-dependent mRNP granule complex containing untranslated mRNAs. Part of the small subunit (SSU) processome, composed of more than 70 proteins and the RNA chaperone small nucleolar RNA (snoRNA) U3.

It localises to the cytoplasm. The protein localises to the nucleus. It is found in the nucleolus. In terms of biological role, component of the small ribosomal subunit. The ribosome is a large ribonucleoprotein complex responsible for the synthesis of proteins in the cell. Part of the small subunit (SSU) processome, first precursor of the small eukaryotic ribosomal subunit. During the assembly of the SSU processome in the nucleolus, many ribosome biogenesis factors, an RNA chaperone and ribosomal proteins associate with the nascent pre-rRNA and work in concert to generate RNA folding, modifications, rearrangements and cleavage as well as targeted degradation of pre-ribosomal RNA by the RNA exosome. This Drosophila melanogaster (Fruit fly) protein is Small ribosomal subunit protein uS4.